The primary structure comprises 290 residues: Shikimate dehydrogenase (NADP(+)) (290 aa).

Shikimate-binding positions include serine 24–serine 26 and threonine 71. Lysine 75 (proton acceptor) is an active-site residue. Positions 96 and 111 each coordinate shikimate. NADP(+) contacts are provided by residues glycine 136 to alanine 140, asparagine 160 to arginine 165, and leucine 233. Position 235 (tyrosine 235) interacts with shikimate. Residue glycine 256 participates in NADP(+) binding.

This sequence belongs to the shikimate dehydrogenase family. In terms of assembly, homodimer.

The enzyme catalyses shikimate + NADP(+) = 3-dehydroshikimate + NADPH + H(+). Its pathway is metabolic intermediate biosynthesis; chorismate biosynthesis; chorismate from D-erythrose 4-phosphate and phosphoenolpyruvate: step 4/7. In terms of biological role, involved in the biosynthesis of the chorismate, which leads to the biosynthesis of aromatic amino acids. Catalyzes the reversible NADPH linked reduction of 3-dehydroshikimate (DHSA) to yield shikimate (SA). The sequence is that of Shikimate dehydrogenase (NADP(+)) from Methanopyrus kandleri (strain AV19 / DSM 6324 / JCM 9639 / NBRC 100938).